A 2493-amino-acid polypeptide reads, in one-letter code: Adenylate cyclase (2493 aa).

5 stretches are compositionally biased toward polar residues: residues methionine 1–glutamine 18, arginine 42–threonine 51, serine 60–isoleucine 78, proline 129–proline 147, and alanine 197–asparagine 210. Disordered stretches follow at residues methionine 1–leucine 85, phenylalanine 99–serine 148, alanine 197–serine 325, asparagine 355–serine 444, glycine 475–leucine 565, glutamine 616–tyrosine 660, asparagine 753–serine 832, alanine 854–alanine 882, and arginine 904–threonine 967. A compositionally biased stretch (low complexity) spans proline 211–threonine 233. Composition is skewed to polar residues over residues asparagine 234 to glycine 246 and leucine 253 to proline 264. 2 stretches are compositionally biased toward basic residues: residues alanine 287–serine 303 and histidine 404–lysine 422. Residues lysine 425 to arginine 434 show a composition bias toward basic and acidic residues. Over residues proline 500–serine 525 the composition is skewed to polar residues. Over residues serine 534–serine 555 the composition is skewed to low complexity. Positions threonine 630–serine 640 are enriched in basic and acidic residues. Residues valine 641–tyrosine 660 are compositionally biased toward polar residues. The segment covering valine 754–aspartate 763 has biased composition (acidic residues). Low complexity-rich tracts occupy residues serine 780–serine 791 and alanine 854–proline 870. The segment covering arginine 913–serine 935 has biased composition (polar residues). In terms of domain architecture, Ras-associating spans arginine 970–valine 1072. LRR repeat units follow at residues threonine 1086 to histidine 1107, tryptophan 1110 to cysteine 1132, serine 1134 to serine 1155, threonine 1157 to leucine 1178, glutamate 1181 to isoleucine 1202, threonine 1204 to valine 1225, serine 1227 to leucine 1248, asparagine 1250 to leucine 1271, serine 1273 to proline 1294, arginine 1295 to glutamine 1316, leucine 1317 to threonine 1336, aspartate 1339 to glutamine 1360, alanine 1363 to lysine 1385, arginine 1386 to leucine 1407, alanine 1409 to cysteine 1430, serine 1432 to arginine 1453, serine 1511 to threonine 1534, serine 1535 to threonine 1556, lysine 1559 to valine 1580, glutamate 1583 to lysine 1605, lysine 1606 to tryptophan 1628, and glutamate 1635 to serine 1654. Residues alanine 1710 to valine 2000 enclose the PPM-type phosphatase domain. Positions alanine 2058 to serine 2194 constitute a Guanylate cyclase domain. The Mg(2+) site is built by aspartate 2063 and aspartate 2105. Disordered regions lie at residues aspartate 2220 to glutamate 2241, glutamate 2354 to alanine 2378, and proline 2467 to proline 2493. Over residues alanine 2470–arginine 2485 the composition is skewed to polar residues.

The protein belongs to the adenylyl cyclase class-3 family. Mg(2+) is required as a cofactor.

It catalyses the reaction ATP = 3',5'-cyclic AMP + diphosphate. Functionally, plays essential roles in regulation of cellular metabolism by catalyzing the synthesis of a second messenger, cAMP. In Mycosarcoma maydis (Corn smut fungus), this protein is Adenylate cyclase (UAC1).